We begin with the raw amino-acid sequence, 186 residues long: Elongation factor P (186 aa).

It belongs to the elongation factor P family.

The protein resides in the cytoplasm. The protein operates within protein biosynthesis; polypeptide chain elongation. Involved in peptide bond synthesis. Stimulates efficient translation and peptide-bond synthesis on native or reconstituted 70S ribosomes in vitro. Probably functions indirectly by altering the affinity of the ribosome for aminoacyl-tRNA, thus increasing their reactivity as acceptors for peptidyl transferase. This is Elongation factor P from Streptococcus gordonii (strain Challis / ATCC 35105 / BCRC 15272 / CH1 / DL1 / V288).